A 246-amino-acid chain; its full sequence is YjeF N-terminal domain-containing 3 (246 aa).

One can recognise a YjeF N-terminal domain in the interval 24-234 (VATVETELLR…DIQKKYELNL (211 aa)).

In terms of assembly, interacts with apoa1a. Binds to high-density lipoprotein.

Functionally, accelerates cholesterol efflux from endothelial cells to high-density lipoprotein (HDL) and thereby regulates angiogenesis. Orchestrates hematopoietic stem and progenitor cell emergence from the hemogenic endothelium, a type of specialized endothelium manifesting hematopoietic potential. YJEFN3-mediated cholesterol efflux activates endothelial SREBF2, the master transcription factor for cholesterol biosynthesis, which in turn transactivates NOTCH and promotes hematopoietic stem and progenitor cell emergence. This is YjeF N-terminal domain-containing 3 from Danio rerio (Zebrafish).